The following is a 104-amino-acid chain: Large ribosomal subunit protein uL24 (104 aa).

It belongs to the universal ribosomal protein uL24 family. As to quaternary structure, part of the 50S ribosomal subunit.

Its function is as follows. One of two assembly initiator proteins, it binds directly to the 5'-end of the 23S rRNA, where it nucleates assembly of the 50S subunit. Functionally, one of the proteins that surrounds the polypeptide exit tunnel on the outside of the subunit. The sequence is that of Large ribosomal subunit protein uL24 from Corynebacterium diphtheriae (strain ATCC 700971 / NCTC 13129 / Biotype gravis).